We begin with the raw amino-acid sequence, 326 residues long: Sulfate/thiosulfate import ATP-binding protein CysA (326 aa).

The ABC transporter domain maps to Ile-3 to Leu-237. Gly-35–Thr-42 is an ATP binding site.

The protein belongs to the ABC transporter superfamily. Sulfate/tungstate importer (TC 3.A.1.6) family. In terms of assembly, the complex is composed of two ATP-binding proteins (CysA), two transmembrane proteins (CysT and CysW) and a solute-binding protein (CysP).

It localises to the cell inner membrane. It catalyses the reaction sulfate(out) + ATP + H2O = sulfate(in) + ADP + phosphate + H(+). It carries out the reaction thiosulfate(out) + ATP + H2O = thiosulfate(in) + ADP + phosphate + H(+). Part of the ABC transporter complex CysAWTP involved in sulfate/thiosulfate import. Responsible for energy coupling to the transport system. The sequence is that of Sulfate/thiosulfate import ATP-binding protein CysA from Pseudomonas syringae pv. tomato (strain ATCC BAA-871 / DC3000).